We begin with the raw amino-acid sequence, 567 residues long: Oxygen-dependent choline dehydrogenase (567 aa).

An FAD-binding site is contributed by 4–33 (DYIIIGAGSAGNVLAARLTEDADVTVLLLE). His-473 (proton acceptor) is an active-site residue.

The protein belongs to the GMC oxidoreductase family. Requires FAD as cofactor.

It catalyses the reaction choline + A = betaine aldehyde + AH2. The catalysed reaction is betaine aldehyde + NAD(+) + H2O = glycine betaine + NADH + 2 H(+). It functions in the pathway amine and polyamine biosynthesis; betaine biosynthesis via choline pathway; betaine aldehyde from choline (cytochrome c reductase route): step 1/1. Functionally, involved in the biosynthesis of the osmoprotectant glycine betaine. Catalyzes the oxidation of choline to betaine aldehyde and betaine aldehyde to glycine betaine at the same rate. The chain is Oxygen-dependent choline dehydrogenase from Yersinia pestis (strain Pestoides F).